A 512-amino-acid polypeptide reads, in one-letter code: Retinaldehyde dehydrogenase 3 (512 aa).

The tract at residues 1 to 23 (MATANGAVENGQPDGKPPALPRP) is disordered. Residue Ala-2 is modified to N-acetylalanine. NAD(+) is bound by residues Lys-204, Glu-207, and 257 to 262 (GSTEVG). The Proton acceptor role is filled by Glu-280. Residue Cys-314 is the Nucleophile of the active site. NAD(+) is bound by residues Gln-361 and Glu-411.

It belongs to the aldehyde dehydrogenase family. As to quaternary structure, homotetramer.

It is found in the cytoplasm. It carries out the reaction all-trans-retinal + NAD(+) + H2O = all-trans-retinoate + NADH + 2 H(+). The catalysed reaction is retinal + NAD(+) + H2O = retinoate + NADH + 2 H(+). The enzyme catalyses all-trans-13,14-dihydroretinal + NAD(+) + H2O = all-trans-13,14-dihydroretinoate + NADH + 2 H(+). The protein operates within cofactor metabolism; retinol metabolism. Catalyzes the NAD-dependent oxidation of aldehyde substrates, such as all-trans-retinal and all-trans-13,14-dihydroretinal, to their corresponding carboxylic acids, all-trans-retinoate and all-trans-13,14-dihydroretinoate, respectively. High specificity for all-trans-retinal as substrate, can also accept acetaldehyde as substrate in vitro but with lower affinity. Required for the biosynthesis of normal levels of retinoate in the embryonic ocular and nasal regions; a critical lipid in the embryonic development of the eye and the nasal region. The sequence is that of Retinaldehyde dehydrogenase 3 (Aldh1a3) from Rattus norvegicus (Rat).